The sequence spans 303 residues: HTH-type transcriptional regulator LysG (303 aa).

An HTH lysR-type domain is found at 6 to 62 (LDGPQLAALAAVVELGSFDAAAERLHVTPSAVSQRIKSLEQQVGQVLVVREKPCRAT). A DNA-binding region (H-T-H motif) is located at residues 23–42 (FDAAAERLHVTPSAVSQRIK).

This sequence belongs to the LysR transcriptional regulatory family. Homodimer.

Its function is as follows. Positively regulates the expression of the exporter LysE and represses its own expression. This chain is HTH-type transcriptional regulator LysG, found in Mycobacterium bovis (strain ATCC BAA-935 / AF2122/97).